The chain runs to 81 residues: Apolipoprotein C-I, acidic form (81 aa).

Positions 1 to 24 are cleaved as a signal peptide; sequence MRLFLSLLVVVLSIVLEGPTPAQG.

Belongs to the apolipoprotein C1 family.

The protein resides in the secreted. This is Apolipoprotein C-I, acidic form (APOC1A) from Cercocebus atys (Sooty mangabey).